A 375-amino-acid polypeptide reads, in one-letter code: Ornithine carbamoyltransferase, chloroplastic (375 aa).

Carbamoyl phosphate is bound by residues 123-126 (SMRT), arginine 174, histidine 201, and glutamine 204. The L-ornithine site is built by asparagine 232, aspartate 293, serine 297, and methionine 298. The active-site Proton acceptor is the cysteine 333. Residues 333–334 (CL) and arginine 361 contribute to the carbamoyl phosphate site.

It belongs to the aspartate/ornithine carbamoyltransferase superfamily. OTCase family. In terms of assembly, homotrimer.

Its subcellular location is the plastid. The protein localises to the chloroplast. The enzyme catalyses carbamoyl phosphate + L-ornithine = L-citrulline + phosphate + H(+). The chain is Ornithine carbamoyltransferase, chloroplastic (ARGF) from Pisum sativum (Garden pea).